A 270-amino-acid chain; its full sequence is A-type potassium channel modulatory protein KCNIP2 (270 aa).

A compositionally biased stretch (basic and acidic residues) spans 1–17 (MRGQGRKESLSDSRDLD). The segment at 1-33 (MRGQGRKESLSDSRDLDGSYDQLTGHPPGPTKK) is disordered. S9 carries the phosphoserine modification. Residues C45 and C46 are each lipidated (S-palmitoyl cysteine). The EF-hand 1; degenerate domain maps to 81–137 (FELSTVCHRPEGLEQLQEQTKFTRKELQVLYRGFKNECPSGIVNEENFKQIYSQFFP). 3 EF-hand domains span residues 140–175 (DSST…ILRG), 176–211 (TIDD…IYDM), and 224–259 (APRE…DENI). Positions 153, 155, 157, 159, 164, 189, 191, 193, 195, 200, 237, 239, 241, and 248 each coordinate Ca(2+). The interaction with KCND2 stretch occupies residues 257–270 (ENIMRSMQLFDNVI).

Belongs to the recoverin family. In terms of assembly, component of heteromultimeric potassium channels. Identified in potassium channel complexes containing KCND1, KCND2, KCND3, KCNIP1, KCNIP2, KCNIP3, KCNIP4, DPP6 and DPP10. The KCND2-KCNIP2 channel complex contains four KCND2 and four KCNIP2 subunits. Interacts with KCND2. Probably part of a complex consisting of KCNIP1, KCNIP2 isoform 3 and KCND2. At least isoform 2 and isoform 3 can self-associate to form homodimers and homotetramers. Isoform 3 interacts with KCNIP1 in a calcium-dependent manner. Interacts with KCND3; each KCNIP2 monomer interacts with two adjacent KCND3 subunits, through both the N-terminal inactivation ball of a KCND3 subunit and a C-terminal helix from the adjacent KCND3 subunit, clamping them together; this interaction modulates the channel gating kinetics. Palmitoylated. Palmitoylation enhances association with the plasma membrane. Expressed in heart ventricle with isoform 1 as most prominent form.

The protein localises to the cell membrane. Functionally, regulatory subunit of Kv4/D (Shal)-type voltage-gated rapidly inactivating A-type potassium channels. Modulates channel density, inactivation kinetics and rate of recovery from inactivation in a calcium-dependent and isoform-specific manner. Involved in KCND2 and KCND3 trafficking to the cell surface. May be required for the expression of I(To) currents in the heart. The protein is A-type potassium channel modulatory protein KCNIP2 of Mustela putorius furo (European domestic ferret).